The primary structure comprises 227 residues: Uracil-DNA glycosylase (227 aa).

D68 (proton acceptor) is an active-site residue.

This sequence belongs to the uracil-DNA glycosylase (UDG) superfamily. UNG family.

The protein localises to the cytoplasm. The enzyme catalyses Hydrolyzes single-stranded DNA or mismatched double-stranded DNA and polynucleotides, releasing free uracil.. Excises uracil residues from the DNA which can arise as a result of misincorporation of dUMP residues by DNA polymerase or due to deamination of cytosine. This chain is Uracil-DNA glycosylase, found in Mycobacterium avium (strain 104).